We begin with the raw amino-acid sequence, 366 residues long: 5-hydroxytryptamine receptor 1F (366 aa).

The Extracellular portion of the chain corresponds to M1 to I24. 2 N-linked (GlcNAc...) asparagine glycosylation sites follow: N5 and N10. The helical transmembrane segment at L25–I49 threads the bilayer. At V50–N59 the chain is on the cytoplasmic side. The chain crosses the membrane as a helical span at residues Y60–I81. The Extracellular segment spans residues V82–C96. The cysteines at positions 96 and 172 are disulfide-linked. A helical membrane pass occupies residues D97 to L119. The serotonin site is built by D103 and C107. The short motif at D120–Y122 is the DRY motif; important for ligand-induced conformation changes element. At D120–Q139 the chain is on the cytoplasmic side. The helical transmembrane segment at A140–L159 threads the bilayer. At F160–H178 the chain is on the extracellular side. The helical transmembrane segment at I179 to Y202 threads the bilayer. Over K203–A291 the chain is Cytoplasmic. The chain crosses the membrane as a helical span at residues A292–V315. Over V316–E327 the chain is Extracellular. Residues M328–F350 traverse the membrane as a helical segment. Positions N343–Y347 match the NPxxY motif; important for ligand-induced conformation changes and signaling motif. The Cytoplasmic portion of the chain corresponds to N351 to Y366.

The protein belongs to the G-protein coupled receptor 1 family.

The protein resides in the cell membrane. In terms of biological role, G-protein coupled receptor for 5-hydroxytryptamine (serotonin). Also functions as a receptor for various alkaloids and psychoactive substances. Ligand binding causes a conformation change that triggers signaling via guanine nucleotide-binding proteins (G proteins) and modulates the activity of downstream effectors, such as adenylate cyclase. HTR1F is coupled to G(i)/G(o) G alpha proteins and mediates inhibitory neurotransmission by inhibiting adenylate cyclase activity. This is 5-hydroxytryptamine receptor 1F (HTR1F) from Cavia porcellus (Guinea pig).